The following is a 278-amino-acid chain: Bis(5'-nucleosyl)-tetraphosphatase, symmetrical (278 aa).

The protein belongs to the Ap4A hydrolase family.

It catalyses the reaction P(1),P(4)-bis(5'-adenosyl) tetraphosphate + H2O = 2 ADP + 2 H(+). In terms of biological role, hydrolyzes diadenosine 5',5'''-P1,P4-tetraphosphate to yield ADP. In Buchnera aphidicola subsp. Baizongia pistaciae (strain Bp), this protein is Bis(5'-nucleosyl)-tetraphosphatase, symmetrical.